A 423-amino-acid chain; its full sequence is Divalent metal cation transporter MntH (423 aa).

Helical transmembrane passes span 31 to 51 (LMML…GNFA), 58 to 78 (SSFG…AMLI), 116 to 136 (IIAI…FQLV), 137 to 157 (FGIS…MILI), 168 to 188 (VVIG…LFFA), 213 to 233 (AAGI…SALF), 254 to 274 (IAMV…AAVF), 302 to 322 (VLFG…GTMA), 342 to 362 (FITM…TDIL), 363 to 383 (VMSQ…LLIF), and 401 to 421 (YAGV…MVTL).

Belongs to the NRAMP family.

Its subcellular location is the cell inner membrane. In terms of biological role, h(+)-stimulated, divalent metal cation uptake system. This is Divalent metal cation transporter MntH from Vibrio campbellii (strain ATCC BAA-1116).